A 319-amino-acid chain; its full sequence is Solute carrier family 25 member 34 (319 aa).

Residues 1-22 (MNSAFSGPSSPTPGPSPPRPPL) form a disordered region. Positions 10–22 (SPTPGPSPPRPPL) are enriched in pro residues. Solcar repeat units lie at residues 22–115 (LWPP…MQAA), 119–212 (DGPC…AKDW), and 222–313 (LSSL…LRQR). 6 helical membrane-spanning segments follow: residues 25 to 45 (PLDF…TNPL), 63 to 83 (SYRR…RTDG), 116 to 138 (GVTD…GAFI), 188 to 209 (VNGA…FSSA), 224 to 244 (SLNT…IMTP), and 296 to 319 (LAPH…PYTH).

Belongs to the mitochondrial carrier (TC 2.A.29) family.

The protein localises to the mitochondrion inner membrane. This Danio rerio (Zebrafish) protein is Solute carrier family 25 member 34 (slc25a34).